Here is a 341-residue protein sequence, read N- to C-terminus: Uroporphyrinogen decarboxylase (341 aa).

Substrate is bound by residues 23–27, F42, D73, Y148, S203, and H318; that span reads RQAGR.

It belongs to the uroporphyrinogen decarboxylase family. As to quaternary structure, homodimer.

The protein localises to the cytoplasm. It catalyses the reaction uroporphyrinogen III + 4 H(+) = coproporphyrinogen III + 4 CO2. It functions in the pathway porphyrin-containing compound metabolism; protoporphyrin-IX biosynthesis; coproporphyrinogen-III from 5-aminolevulinate: step 4/4. Functionally, catalyzes the decarboxylation of four acetate groups of uroporphyrinogen-III to yield coproporphyrinogen-III. The protein is Uroporphyrinogen decarboxylase of Brucella melitensis biotype 1 (strain ATCC 23456 / CCUG 17765 / NCTC 10094 / 16M).